The sequence spans 908 residues: Probable serine/threonine-protein kinase DDB_G0278521 (908 aa).

Residues 1–153 lie on the Extracellular side of the membrane; the sequence is MSNNKIIESL…RGEKLSTLDR (153 aa). Residues 154–174 traverse the membrane as a helical segment; that stretch reads IICFSIIYSQDQILLFLLNFI. The Cytoplasmic portion of the chain corresponds to 175 to 908; the sequence is LSNINCNNNN…SDQNDSDLYD (734 aa). 5 ANK repeats span residues 258–289, 300–326, 330–361, 362–391, and 395–424; these read LKVY…NVYN, TNRS…NIHD, KGML…ALDQ, SNNT…RLSI, and NGRY…KMNS. The segment covering 461–472 has biased composition (low complexity); it reads NSNNLTNSNSSS. Positions 461 to 491 are disordered; that stretch reads NSNNLTNSNSSSVGGLRISNGGNTQQQSIQI. Residues 480 to 490 show a composition bias toward polar residues; it reads NGGNTQQQSIQ. The ANK 6 repeat unit spans residues 495-524; that stretch reads ENNTPIDLLVLNNHFTIAIELLKYEGYIVG. Residues 530–817 enclose the Protein kinase domain; sequence FKTARKIGAG…LPIANIPKFL (288 aa). ATP contacts are provided by residues 536–544 and Lys-557; that span reads IGAGAFGDV. The active-site Proton acceptor is the Asp-677.

The protein belongs to the protein kinase superfamily. TKL Ser/Thr protein kinase family.

It localises to the membrane. It catalyses the reaction L-seryl-[protein] + ATP = O-phospho-L-seryl-[protein] + ADP + H(+). It carries out the reaction L-threonyl-[protein] + ATP = O-phospho-L-threonyl-[protein] + ADP + H(+). The sequence is that of Probable serine/threonine-protein kinase DDB_G0278521 from Dictyostelium discoideum (Social amoeba).